The following is a 222-amino-acid chain: Ribosomal RNA large subunit methyltransferase E (222 aa).

Residues 1-13 (MSRSDKNPHERLK) are compositionally biased toward basic and acidic residues. The tract at residues 1–22 (MSRSDKNPHERLKTAKKRTASS) is disordered. S-adenosyl-L-methionine-binding residues include G75, W77, D94, D110, and D134. K174 functions as the Proton acceptor in the catalytic mechanism.

Belongs to the class I-like SAM-binding methyltransferase superfamily. RNA methyltransferase RlmE family.

The protein resides in the cytoplasm. It carries out the reaction uridine(2552) in 23S rRNA + S-adenosyl-L-methionine = 2'-O-methyluridine(2552) in 23S rRNA + S-adenosyl-L-homocysteine + H(+). Functionally, specifically methylates the uridine in position 2552 of 23S rRNA at the 2'-O position of the ribose in the fully assembled 50S ribosomal subunit. This chain is Ribosomal RNA large subunit methyltransferase E, found in Novosphingobium aromaticivorans (strain ATCC 700278 / DSM 12444 / CCUG 56034 / CIP 105152 / NBRC 16084 / F199).